Here is a 407-residue protein sequence, read N- to C-terminus: Probable tRNA sulfurtransferase (407 aa).

The region spanning 61-165 (NEITYRLSKI…LDAIYMYEEV (105 aa)) is the THUMP domain. Residues 183 to 184 (ML), 208 to 209 (HF), arginine 265, glycine 287, and glutamine 296 each bind ATP.

This sequence belongs to the ThiI family.

The protein localises to the cytoplasm. The enzyme catalyses [ThiI sulfur-carrier protein]-S-sulfanyl-L-cysteine + a uridine in tRNA + 2 reduced [2Fe-2S]-[ferredoxin] + ATP + H(+) = [ThiI sulfur-carrier protein]-L-cysteine + a 4-thiouridine in tRNA + 2 oxidized [2Fe-2S]-[ferredoxin] + AMP + diphosphate. It catalyses the reaction [ThiS sulfur-carrier protein]-C-terminal Gly-Gly-AMP + S-sulfanyl-L-cysteinyl-[cysteine desulfurase] + AH2 = [ThiS sulfur-carrier protein]-C-terminal-Gly-aminoethanethioate + L-cysteinyl-[cysteine desulfurase] + A + AMP + 2 H(+). It participates in cofactor biosynthesis; thiamine diphosphate biosynthesis. Its function is as follows. Catalyzes the ATP-dependent transfer of a sulfur to tRNA to produce 4-thiouridine in position 8 of tRNAs, which functions as a near-UV photosensor. Also catalyzes the transfer of sulfur to the sulfur carrier protein ThiS, forming ThiS-thiocarboxylate. This is a step in the synthesis of thiazole, in the thiamine biosynthesis pathway. The sulfur is donated as persulfide by IscS. The protein is Probable tRNA sulfurtransferase of Staphylococcus aureus (strain JH1).